A 351-amino-acid polypeptide reads, in one-letter code: Thiamine-phosphate synthase (351 aa).

The segment at 1–128 (MLNSNTKDHE…SKIASEIRYE (128 aa)) is unknown. Residues 129 to 351 (IYTVEIDLLS…MILKELSHEN (223 aa)) form a thiamine-phosphate synthase region. 4-amino-2-methyl-5-(diphosphooxymethyl)pyrimidine-binding positions include 180-184 (QHRFK) and N212. Mg(2+) is bound by residues D213 and D232. S251 serves as a coordination point for 4-amino-2-methyl-5-(diphosphooxymethyl)pyrimidine. 277–279 (TTT) is a binding site for 2-[(2R,5Z)-2-carboxy-4-methylthiazol-5(2H)-ylidene]ethyl phosphate. K280 provides a ligand contact to 4-amino-2-methyl-5-(diphosphooxymethyl)pyrimidine. G307 lines the 2-[(2R,5Z)-2-carboxy-4-methylthiazol-5(2H)-ylidene]ethyl phosphate pocket.

This sequence belongs to the thiamine-phosphate synthase family. Mg(2+) is required as a cofactor.

The catalysed reaction is 2-[(2R,5Z)-2-carboxy-4-methylthiazol-5(2H)-ylidene]ethyl phosphate + 4-amino-2-methyl-5-(diphosphooxymethyl)pyrimidine + 2 H(+) = thiamine phosphate + CO2 + diphosphate. It catalyses the reaction 2-(2-carboxy-4-methylthiazol-5-yl)ethyl phosphate + 4-amino-2-methyl-5-(diphosphooxymethyl)pyrimidine + 2 H(+) = thiamine phosphate + CO2 + diphosphate. The enzyme catalyses 4-methyl-5-(2-phosphooxyethyl)-thiazole + 4-amino-2-methyl-5-(diphosphooxymethyl)pyrimidine + H(+) = thiamine phosphate + diphosphate. Its pathway is cofactor biosynthesis; thiamine diphosphate biosynthesis; thiamine phosphate from 4-amino-2-methyl-5-diphosphomethylpyrimidine and 4-methyl-5-(2-phosphoethyl)-thiazole: step 1/1. Its function is as follows. Condenses 4-methyl-5-(beta-hydroxyethyl)thiazole monophosphate (THZ-P) and 2-methyl-4-amino-5-hydroxymethyl pyrimidine pyrophosphate (HMP-PP) to form thiamine monophosphate (TMP). The chain is Thiamine-phosphate synthase from Prochlorococcus marinus (strain AS9601).